We begin with the raw amino-acid sequence, 191 residues long: ATP-dependent Clp protease proteolytic subunit 1 (191 aa).

The active-site Nucleophile is the Ser-91. His-116 is a catalytic residue.

This sequence belongs to the peptidase S14 family. As to quaternary structure, fourteen ClpP subunits assemble into 2 heptameric rings which stack back to back to give a disk-like structure with a central cavity, resembling the structure of eukaryotic proteasomes.

The protein resides in the cytoplasm. It catalyses the reaction Hydrolysis of proteins to small peptides in the presence of ATP and magnesium. alpha-casein is the usual test substrate. In the absence of ATP, only oligopeptides shorter than five residues are hydrolyzed (such as succinyl-Leu-Tyr-|-NHMec, and Leu-Tyr-Leu-|-Tyr-Trp, in which cleavage of the -Tyr-|-Leu- and -Tyr-|-Trp bonds also occurs).. Cleaves peptides in various proteins in a process that requires ATP hydrolysis. Has a chymotrypsin-like activity. Plays a major role in the degradation of misfolded proteins. The sequence is that of ATP-dependent Clp protease proteolytic subunit 1 from Chlamydia caviae (strain ATCC VR-813 / DSM 19441 / 03DC25 / GPIC) (Chlamydophila caviae).